The primary structure comprises 459 residues: Interleukin-7 receptor subunit alpha (459 aa).

The N-terminal stretch at 1-20 (MTILGTTFGVFFSLLQVVSG) is a signal peptide. The Extracellular portion of the chain corresponds to 21–241 (ESGYAQNGDL…NNHSGETNPT (221 aa)). C42 and C57 form a disulfide bridge. 2 N-linked (GlcNAc...) asparagine glycosylation sites follow: N49 and N65. Intrachain disulfides connect C74–C82 and C108–C118. Positions 131 to 231 (APFDLSVIYR…PSYYFRTPEI (101 aa)) constitute a Fibronectin type-III domain. N-linked (GlcNAc...) asparagine glycosylation occurs at N182. Positions 217-221 (WSEWS) match the WSXWS motif motif. A helical transmembrane segment spans residues 242 to 262 (LLTISILSVLSVVLLVILACV). Over 263 to 459 (LWKKRIKPII…VTMSSFCQKR (197 aa)) the chain is Cytoplasmic. The Box 1 motif signature appears at 272 to 280 (IWPSLPDHK). T282 carries the post-translational modification Phosphothreonine; by PKC. Positions 327 to 357 (TVPPQLEESETQRPGGDVQSPSWPSENVVTT) are disordered. A compositionally biased stretch (polar residues) spans 345–357 (QSPSWPSENVVTT).

Belongs to the type I cytokine receptor family. Type 4 subfamily. As to quaternary structure, the IL7 receptor is a heterodimer of IL7R and IL2RG. The TSLP receptor is a heterodimer of CRLF2 and IL7R. Interacts with CD53. Post-translationally, N-glycosylated IL-7Ralpha binds IL7 300-fold more tightly than the unglycosylated form. Ubiquitinated by MARCHF8; leading to lysosomal degradation.

It localises to the cell membrane. In terms of biological role, receptor for interleukin-7. Also acts as a receptor for thymic stromal lymphopoietin (TSLP). This chain is Interleukin-7 receptor subunit alpha (IL7R), found in Callithrix jacchus (White-tufted-ear marmoset).